The following is a 1059-amino-acid chain: Cellulose synthase catalytic subunit A [UDP-forming] (1059 aa).

Disordered regions lie at residues Met1 to Thr159 and Met174 to Ala220. Residues Asn15–Gly36 show a composition bias toward low complexity. 2 stretches are compositionally biased toward polar residues: residues Gly40 to Leu57 and Asn142 to Gly154. Residues Gln181–Gln194 show a composition bias toward low complexity. The span at Gln204 to Val219 shows a compositional bias: basic residues. 3 consecutive transmembrane segments (helical) span residues Phe246–Phe266, Ile280–Ala300, and Phe306–Ala323. Residues Lys328–Gln628 form a catalytic subdomain A region. Asp370 is a catalytic residue. Residues Asp624 and Asp626 each coordinate substrate. The interval Gln701–Ala761 is catalytic subdomain B. Residue Asp717 is part of the active site. 2 helical membrane-spanning segments follow: residues Ile790–Ile810 and Val813–Val833. The interval Asp933 to Lys953 is disordered. The span at Ser939–Lys953 shows a compositional bias: basic and acidic residues. 3 helical membrane-spanning segments follow: residues Leu963 to Leu983, Trp993 to Ile1013, and Ile1035 to Ile1055.

This sequence belongs to the glycosyltransferase 2 family. Mg(2+) is required as a cofactor.

It is found in the membrane. The catalysed reaction is [(1-&gt;4)-beta-D-glucosyl](n) + UDP-alpha-D-glucose = [(1-&gt;4)-beta-D-glucosyl](n+1) + UDP + H(+). Its pathway is glycan metabolism; amoeba cellulose biosynthesis. Functionally, catalytic subunit of cellulose synthase. It incorporates glucose from uridine 5'-diphosphate glucose (UDP-alpha-D-glucose) to cellulose (a (1-&gt;4)-beta-D-glucan), which is produced as an extracellular component for mechanical and chemical protection at the onset of the stalk formation, when the cells exhibit multicellular behavior during culmination. This Dictyostelium discoideum (Social amoeba) protein is Cellulose synthase catalytic subunit A [UDP-forming] (dcsA).